Here is a 105-residue protein sequence, read N- to C-terminus: Thioredoxin (105 aa).

In terms of domain architecture, Thioredoxin spans 2–105 (VKQIDSKDAF…KLEATINEFV (104 aa)). The residue at position 3 (lysine 3) is an N6-acetyllysine. Lysine 8 carries the post-translational modification N6-succinyllysine. Catalysis depends on nucleophile residues cysteine 32 and cysteine 35. A disulfide bond links cysteine 32 and cysteine 35. Lysine 39 carries the post-translational modification N6-acetyllysine. Cysteine 62 and cysteine 69 each carry S-nitrosocysteine. Cysteine 73 carries the post-translational modification S-nitrosocysteine; alternate. An N6-acetyllysine; alternate modification is found at lysine 94. N6-succinyllysine; alternate is present on lysine 94.

This sequence belongs to the thioredoxin family. As to quaternary structure, homodimer; disulfide-linked. Interacts with TXNIP through the redox-active site. Interacts with MAP3K5 and CASP3. Interacts with APEX1; the interaction stimulates the FOS/JUN AP-1 DNA-binding activity in a redox-dependent manner. Post-translationally, in the fully reduced protein, both Cys-69 and Cys-73 are nitrosylated in response to nitric oxide (NO). When two disulfide bonds are present in the protein, only Cys-73 is nitrosylated. Cys-73 can serve as donor for nitrosylation of target proteins.

Its subcellular location is the nucleus. It localises to the cytoplasm. The protein localises to the secreted. Its function is as follows. Participates in various redox reactions through the reversible oxidation of its active center dithiol to a disulfide and catalyzes dithiol-disulfide exchange reactions. Plays a role in the reversible S-nitrosylation of cysteine residues in target proteins, and thereby contributes to the response to intracellular nitric oxide. Nitrosylates the active site Cys of CASP3 in response to nitric oxide (NO), and thereby inhibits caspase-3 activity. Induces the FOS/JUN AP-1 DNA binding activity in ionizing radiation (IR) cells through its oxidation/reduction status and stimulates AP-1 transcriptional activity. This chain is Thioredoxin (TXN), found in Callithrix jacchus (White-tufted-ear marmoset).